Here is a 42-residue protein sequence, read N- to C-terminus: Large ribosomal subunit protein P2 (42 aa).

It belongs to the eukaryotic ribosomal protein P1/P2 family. In terms of assembly, P1 and P2 exist as dimers at the large ribosomal subunit. Post-translationally, phosphorylated.

Its function is as follows. Plays an important role in the elongation step of protein synthesis. In Triticum aestivum (Wheat), this protein is Large ribosomal subunit protein P2.